Here is an 800-residue protein sequence, read N- to C-terminus: MDIPHEAEAGAWGILPGFGRHHHPSSDATLFSSSLPVFPRGKLQLSDNRDGFSLIDDTAVSRTNKFNESADDFESHSIGNLLPDEEDLLTGMMDDLDLGELPDADDYDLFGSGGGMELDADFRDNLSMSGPPRLSLSSLGGNAIPQFNIPNGAGTVAGEHPYGEHPSRTLFVRNINSNVEDSELTALFEQYGDIRTLYTTCKHRGFVMISYYDIRSARMAMRSLQNKPLRRRKLDIHFSIPKDNPSEKDMNQGTLVVFNLDPSISNDDLHGIFGAHGEIKEIRETPHKRHHKFVEFYDVRGAEAALKALNRCEIAGKRIKVEPSRPGGARRSLMLQLNQDLENDDLHYLPMIGSPMANSPPMQGNWPLNSPVEGSPLQSVLSRSPVFGLSPTRNGHLSGLASALNSQGPSSKLAPIGRGQIGSNGFQQSSHLFQEPKMDNKYTGNLSPSGPLISNGGGIETLSGSEFLWGSPNARSEPSSSSVWSTSSTGNPLFSTRVDRSVPFPHQHQNQSRSHHHFHVGSAPSGVPLEKHFGFVPESSKDALFMNTVGLQGMSGMGLNGGSFSSKMANNGIINSGSMAENGFSSYRMMSSPRFSPMFLSSGLNPGRFASGFDSLYENGRPRRVENNSNQVESRKQFQLDLEKILNGEDSRTTLMIKNIPNKYTSKMLLAAIDEKNQGTYNFLYLPIDFKNKCNVGYAFINMLNPELIIPFYEAFNGKKWEKFNSEKVASLAYARIQGKSALIAHFQNSSLMNEDMRCRPIIFDTPNNPESVEQVVDEESKNMDLLDSQLSDDDGRERS.

RRM domains are found at residues 168–241 and 253–326; these read RTLF…FSIP and GTLV…PSRP. 2 positions are modified to phosphoserine: serine 384 and serine 390. Disordered regions lie at residues 470 to 489 and 776 to 800; these read GSPN…TSST and VVDE…RERS. Positions 471–488 are enriched in low complexity; the sequence is SPNARSEPSSSSVWSTSS. A phosphoserine mark is found at serine 789 and serine 792.

Its function is as follows. Probable RNA-binding protein that plays a role in meiosis and vegetative growth. The protein is Protein MEI2-like 5 (ML5) of Arabidopsis thaliana (Mouse-ear cress).